The chain runs to 873 residues: MAAPSSNYQLYGLKIGFPPGGLMRNKQMKFNDYGITVKEAIQIITNKQGMQNPDSYTLQITYSDEPSSINTSSGNIGSNNNSSSNTPLTGSLGMGPPPPSASIGGGGGGGDNGITNSGNIGSSSNSDLKKSTSSGIVNVNNSSNAPTRRLKWMDDNEKLISYPLGAHDVVIELKKKYQLIKVYDGKQTMNLIVDITKPLSDLMDLVSCKFKLRSTSDCKLFTYGKEINLNSNIKNLNIDTSLPFILRDNNDPNSLSLESIQWDNGNGFFVGGNGGIGGIGSDDDADDINNNLSVPAKSIINPVREGYLKKQDKKKSWKTRYFKLTDKYLYWYKSPTAIKASGMIICKDYHIKLAPSTHSKEVKLEFTPKHMIAGATTIIHYIKFENEQELKQWTVLPIVIESSNDSGSNNSNTSGGNQSMIGKKVFGVPIEKTVSGNNEIPAVVLQTIDYIEKKAMDIVGIFRLSGSVLTIEQWKAKYDKGEKVDLFQEVDPHAVAGLLKLYLRELPDPLLTYEKYDNFIAAQSIDDFPSRIKLIKHLVKSLPPVNYAVLSYLMAFVGKVATHSAANKMQVHNLSTVFGPNLIKDRQDSGDYGNNVQVLVEDTPIINALALSLIRDYQYIFTDKEIPEQKILAKSLYEYAGNDDGTTSEDDKDLLFPKGATIKVTQQGTDGWWTGEYQGKQGKFPASYVELLPHSPSTLLRTKSNSNLTKKKKFMLEMESTKTKNQEIDKNIKQLEITKKELESTINDLENEKAALENDPTIKAMMNLLANAKTNKDIAMIPKNIDVLFQKFEEYKSSHEALATTKTTLIDEYEQFNNNPKKRLDTKEKEQIQQKYDNLSIIIDKSQKIRSKSINSKKIINDDLVELKKIFSL.

The interval 64-147 is disordered; sequence DEPSSINTSS…NVNNSSNAPT (84 aa). The segment covering 66–91 has biased composition (low complexity); it reads PSSINTSSGNIGSNNNSSSNTPLTGS. The segment covering 103–112 has biased composition (gly residues); that stretch reads IGGGGGGGDN. Over residues 113–144 the composition is skewed to low complexity; sequence GITNSGNIGSSSNSDLKKSTSSGIVNVNNSSN. The PH domain occupies 301–402; the sequence is NPVREGYLKK…WTVLPIVIES (102 aa). The Rho-GAP domain maps to 428–621; it reads VPIEKTVSGN…SLIRDYQYIF (194 aa). Residues 628–694 enclose the SH3 domain; the sequence is EQKILAKSLY…PASYVELLPH (67 aa). Residues 715–761 are a coiled coil; it reads MLEMESTKTKNQEIDKNIKQLEITKKELESTINDLENEKAALENDPT.

The protein resides in the cytoplasm. In terms of biological role, rho GTPase-activating protein involved in the signal transduction pathway. This Dictyostelium discoideum (Social amoeba) protein is Rho GTPase-activating protein gacJJ (gacJJ).